The sequence spans 235 residues: Purine nucleoside phosphorylase DeoD-type (235 aa).

Residue H4 coordinates a purine D-ribonucleoside. Phosphate is bound by residues G20, R24, R43, and 87 to 90; that span reads RVGT. Residues 179–181 and 203–204 each bind a purine D-ribonucleoside; these read EME and SD. Catalysis depends on D204, which acts as the Proton donor.

It belongs to the PNP/UDP phosphorylase family. In terms of assembly, homohexamer; trimer of homodimers.

The catalysed reaction is a purine D-ribonucleoside + phosphate = a purine nucleobase + alpha-D-ribose 1-phosphate. It carries out the reaction a purine 2'-deoxy-D-ribonucleoside + phosphate = a purine nucleobase + 2-deoxy-alpha-D-ribose 1-phosphate. Functionally, catalyzes the reversible phosphorolytic breakdown of the N-glycosidic bond in the beta-(deoxy)ribonucleoside molecules, with the formation of the corresponding free purine bases and pentose-1-phosphate. The protein is Purine nucleoside phosphorylase DeoD-type of Clostridium perfringens (strain ATCC 13124 / DSM 756 / JCM 1290 / NCIMB 6125 / NCTC 8237 / Type A).